We begin with the raw amino-acid sequence, 269 residues long: Ribonuclease HII (269 aa).

The RNase H type-2 domain maps to 83–269 (YLIAGVDEVG…HRMSFLTNIL (187 aa)). Positions 89, 90, and 185 each coordinate a divalent metal cation.

Belongs to the RNase HII family. It depends on Mn(2+) as a cofactor. Requires Mg(2+) as cofactor.

The protein localises to the cytoplasm. The catalysed reaction is Endonucleolytic cleavage to 5'-phosphomonoester.. In terms of biological role, endonuclease that specifically degrades the RNA of RNA-DNA hybrids. This Clostridium botulinum (strain Hall / ATCC 3502 / NCTC 13319 / Type A) protein is Ribonuclease HII.